A 349-amino-acid chain; its full sequence is ALA-interacting subunit 3 (349 aa).

Over residues 1-21 the composition is skewed to low complexity; the sequence is MSSNTASSSAGAAGSGDSSAA. A disordered region spans residues 1 to 30; that stretch reads MSSNTASSSAGAAGSGDSSAARKNSKRPKY. Serine 2 is modified (N-acetylserine). The chain crosses the membrane as a helical span at residues 50–70; that stretch reads VISTFLIVSVIFIPLGVISLF. N-linked (GlcNAc...) asparagine glycans are attached at residues asparagine 181, asparagine 190, and asparagine 223. Residues 305–325 form a helical membrane-spanning segment; the sequence is LGIAYLTVGGICFILALAFTI.

It belongs to the CDC50/LEM3 family. Interacts with ALA2 and ALA3 in a heterologous system. As to expression, expressed in roots, leaves, stems, flowers and siliques.

Its subcellular location is the golgi apparatus membrane. It is found in the prevacuolar compartment membrane. The protein localises to the endoplasmic reticulum membrane. Required for the lipid transport activity of the ALA/ALIS P4-ATPase complex. The chain is ALA-interacting subunit 3 (ALIS3) from Arabidopsis thaliana (Mouse-ear cress).